Consider the following 289-residue polypeptide: Phosphatidylserine decarboxylase proenzyme (289 aa).

Residues Asp-89, His-146, and Ser-252 each act as charge relay system; for autoendoproteolytic cleavage activity in the active site. Ser-252 acts as the Schiff-base intermediate with substrate; via pyruvic acid; for decarboxylase activity in catalysis. Pyruvic acid (Ser); by autocatalysis is present on Ser-252.

It belongs to the phosphatidylserine decarboxylase family. PSD-B subfamily. Prokaryotic type I sub-subfamily. In terms of assembly, heterodimer of a large membrane-associated beta subunit and a small pyruvoyl-containing alpha subunit. The cofactor is pyruvate. Post-translationally, is synthesized initially as an inactive proenzyme. Formation of the active enzyme involves a self-maturation process in which the active site pyruvoyl group is generated from an internal serine residue via an autocatalytic post-translational modification. Two non-identical subunits are generated from the proenzyme in this reaction, and the pyruvate is formed at the N-terminus of the alpha chain, which is derived from the carboxyl end of the proenzyme. The autoendoproteolytic cleavage occurs by a canonical serine protease mechanism, in which the side chain hydroxyl group of the serine supplies its oxygen atom to form the C-terminus of the beta chain, while the remainder of the serine residue undergoes an oxidative deamination to produce ammonia and the pyruvoyl prosthetic group on the alpha chain. During this reaction, the Ser that is part of the protease active site of the proenzyme becomes the pyruvoyl prosthetic group, which constitutes an essential element of the active site of the mature decarboxylase.

It localises to the cell membrane. The enzyme catalyses a 1,2-diacyl-sn-glycero-3-phospho-L-serine + H(+) = a 1,2-diacyl-sn-glycero-3-phosphoethanolamine + CO2. It functions in the pathway phospholipid metabolism; phosphatidylethanolamine biosynthesis; phosphatidylethanolamine from CDP-diacylglycerol: step 2/2. In terms of biological role, catalyzes the formation of phosphatidylethanolamine (PtdEtn) from phosphatidylserine (PtdSer). The chain is Phosphatidylserine decarboxylase proenzyme from Shewanella denitrificans (strain OS217 / ATCC BAA-1090 / DSM 15013).